The primary structure comprises 1445 residues: Protein HUA2-LIKE 1 (1445 aa).

A PWWP domain is found at 20 to 77 (LGDLVLAKVKGFPAWPAKIGQPEDWNQAPDPKKHFVQFYGTGEIGFVTPPDIQPFTSE). Disordered stretches follow at residues 133-197 (KYLN…SPDP), 211-302 (TCTD…DLNI), 319-356 (FENE…SKRL), 409-439 (EHTS…SDSD), 460-491 (DDDD…ANAS), 641-685 (GIPK…TSTP), and 797-835 (LTPS…SLSG). 2 stretches are compositionally biased toward polar residues: residues 173 to 187 (QDSS…SPSS) and 211 to 225 (TCTD…NLVN). Composition is skewed to basic and acidic residues over residues 228–257 (RIIR…RAAT), 274–293 (GQDH…ESSD), and 331–350 (DESK…DQKQ). 2 stretches are compositionally biased toward polar residues: residues 660-673 (RVSS…NQRS) and 797-814 (LTPS…QAGT). Residues 838-979 (EAAISRDTFE…RYIGDLGASG (142 aa)) form the CID domain. The tract at residues 1110–1203 (PATTCATELP…SLPLQPGFAP (94 aa)) is disordered. The segment covering 1124 to 1170 (GSPPLPHESPPSPPPQPPSSPPPPSSPPQLAPAPPPSDHCLPPPTAP) has biased composition (pro residues).

In terms of tissue distribution, expressed throughout young primordia, and vegetative and reproductive apices.

The protein localises to the nucleus. Functionally, probable transcription factor that acts with partial redundancy with HULK2 and HULK3. Plays diverse and essential roles in the control of plant development, physiology and flowering time. This is Protein HUA2-LIKE 1 from Arabidopsis thaliana (Mouse-ear cress).